Here is a 248-residue protein sequence, read N- to C-terminus: Ribosomal RNA small subunit methyltransferase J (248 aa).

Residues 101–102 (RD), 117–118 (ER), 153–154 (SS), and aspartate 171 contribute to the S-adenosyl-L-methionine site.

This sequence belongs to the methyltransferase superfamily. RsmJ family.

It localises to the cytoplasm. The enzyme catalyses guanosine(1516) in 16S rRNA + S-adenosyl-L-methionine = N(2)-methylguanosine(1516) in 16S rRNA + S-adenosyl-L-homocysteine + H(+). Functionally, specifically methylates the guanosine in position 1516 of 16S rRNA. The polypeptide is Ribosomal RNA small subunit methyltransferase J (Pectobacterium atrosepticum (strain SCRI 1043 / ATCC BAA-672) (Erwinia carotovora subsp. atroseptica)).